Reading from the N-terminus, the 582-residue chain is ATP-dependent lipid A-core flippase (582 aa).

The next 5 membrane-spanning stretches (helical) occupy residues 15–35 (LWPI…ALVI), 68–88 (YVVV…SYCL), 140–160 (GALI…AVML), 161–181 (YTSW…AVLI), and 254–274 (VQII…VPTI). The ABC transmembrane type-1 domain maps to 27–310 (VVSGIALVIN…LTNVNAQFQK (284 aa)). Residues 342 to 578 (LSFKNVTFTY…NGAYKQLHHI (237 aa)) enclose the ABC transporter domain. Residue 376-383 (GRSGSGKS) coordinates ATP.

The protein belongs to the ABC transporter superfamily. Lipid exporter (TC 3.A.1.106) family. In terms of assembly, homodimer.

It is found in the cell inner membrane. The catalysed reaction is ATP + H2O + lipid A-core oligosaccharideSide 1 = ADP + phosphate + lipid A-core oligosaccharideSide 2.. Its function is as follows. Involved in lipopolysaccharide (LPS) biosynthesis. Translocates lipid A-core from the inner to the outer leaflet of the inner membrane. Transmembrane domains (TMD) form a pore in the inner membrane and the ATP-binding domain (NBD) is responsible for energy generation. The chain is ATP-dependent lipid A-core flippase from Pasteurella multocida (strain Pm70).